The chain runs to 150 residues: MKPTPINIKNKRASFDYEFIDTYTAGIVLTGTEIKSIRLGKASLVDTYCYFVQGELWVKNMHIAEYFYGSYNNHSARRERKLLLNKKELRKLEEAGKNPGFTIVPVRLFINEKGLAKLVVALAKGKKQYDKRESLKEKDDRREMDRMFKR.

Positions 130–150 (DKRESLKEKDDRREMDRMFKR) are disordered.

This sequence belongs to the SmpB family.

The protein localises to the cytoplasm. Its function is as follows. Required for rescue of stalled ribosomes mediated by trans-translation. Binds to transfer-messenger RNA (tmRNA), required for stable association of tmRNA with ribosomes. tmRNA and SmpB together mimic tRNA shape, replacing the anticodon stem-loop with SmpB. tmRNA is encoded by the ssrA gene; the 2 termini fold to resemble tRNA(Ala) and it encodes a 'tag peptide', a short internal open reading frame. During trans-translation Ala-aminoacylated tmRNA acts like a tRNA, entering the A-site of stalled ribosomes, displacing the stalled mRNA. The ribosome then switches to translate the ORF on the tmRNA; the nascent peptide is terminated with the 'tag peptide' encoded by the tmRNA and targeted for degradation. The ribosome is freed to recommence translation, which seems to be the essential function of trans-translation. This is SsrA-binding protein from Phocaeicola vulgatus (strain ATCC 8482 / DSM 1447 / JCM 5826 / CCUG 4940 / NBRC 14291 / NCTC 11154) (Bacteroides vulgatus).